A 218-amino-acid chain; its full sequence is Cytidylate kinase (218 aa).

ATP is bound at residue 11-19; it reads GPGASGKGT.

The protein belongs to the cytidylate kinase family. Type 1 subfamily.

It localises to the cytoplasm. The enzyme catalyses CMP + ATP = CDP + ADP. The catalysed reaction is dCMP + ATP = dCDP + ADP. The sequence is that of Cytidylate kinase from Neisseria meningitidis serogroup B (strain ATCC BAA-335 / MC58).